A 137-amino-acid chain; its full sequence is Urease subunit beta (137 aa).

The disordered stretch occupies residues 118 to 137; the sequence is IIAEENKVSENANKESGYNR. Polar residues predominate over residues 126-137; sequence SENANKESGYNR.

It belongs to the urease beta subunit family. Heterotrimer of UreA (gamma), UreB (beta) and UreC (alpha) subunits. Three heterotrimers associate to form the active enzyme.

The protein localises to the cytoplasm. It carries out the reaction urea + 2 H2O + H(+) = hydrogencarbonate + 2 NH4(+). It participates in nitrogen metabolism; urea degradation; CO(2) and NH(3) from urea (urease route): step 1/1. This is Urease subunit beta from Staphylococcus xylosus.